A 317-amino-acid chain; its full sequence is UV DNA damage endonuclease (317 aa).

It belongs to the uve1/UvsE family.

In terms of biological role, component in a DNA repair pathway. Removal of UV LIGHT damaged nucleotides. Recognizes pyrimidine dimers and cleave a phosphodiester bond immediately 5' to the lesion. In Bacillus cereus (strain 03BB102), this protein is UV DNA damage endonuclease.